A 330-amino-acid polypeptide reads, in one-letter code: MHLLGPWLLLLEYLAFSDSSKWAFEHPETLYAWEGACVWIPCTYRALDGALESFILFHNPEYNKNTSKFDGTRLYESTKDGEVPSEQKRVQFLGDKSKNCTLSIHPVHVNDSGQLGLRMESKTEKWMERIHLNVSERPFPPHIQLPPEIQESQEVTLTCLLNFSCYGYPIQLQWFLEGVPVGQAAVNSTSLATKSVFTRSELKFSPQWSHHGKIVTCQLHGADGKFLSNDTVQLNVKHTPKLKIEVNPSDAIVREGDSVTMTCEVSSSNPKYTTVSWLKDGTPLKKQNALMLTLQEVTKDQSGKYCCQVSNDVGPGRSEEVFLQVQYAPE.

The N-terminal stretch at 1 to 17 is a signal peptide; it reads MHLLGPWLLLLEYLAFS. In terms of domain architecture, Ig-like V-type spans 18–136; the sequence is DSSKWAFEHP…MERIHLNVSE (119 aa). Over 18 to 330 the chain is Extracellular; that stretch reads DSSKWAFEHP…VFLQVQYAPE (313 aa). 3 cysteine pairs are disulfide-bonded: cysteine 37–cysteine 165, cysteine 42–cysteine 100, and cysteine 159–cysteine 217. Asparagine 65, asparagine 99, and asparagine 110 each carry an N-linked (GlcNAc...) asparagine glycan. Arginine 118 is a binding site for N-acetylneuraminate. Asparagine 133, asparagine 162, asparagine 187, and asparagine 229 each carry an N-linked (GlcNAc...) asparagine glycan. Ig-like C2-type domains lie at 141–233 and 240–324; these read PHIQ…DTVQ and PKLK…VFLQ. A disulfide bond links cysteine 263 and cysteine 307.

It belongs to the immunoglobulin superfamily. SIGLEC (sialic acid binding Ig-like lectin) family. In terms of assembly, predominantly monomer of isoform CD22-beta. Also found as heterodimer of isoform CD22-beta and a shorter isoform. Interacts with PTPN6/SHP-1, LYN, SYK, PIK3R1/PIK3R2 and PLCG1 upon phosphorylation. Interacts with GRB2, INPP5D and SHC1 upon phosphorylation. May form a complex with INPP5D/SHIP, GRB2 and SHC1.

The protein resides in the cell membrane. Functionally, most highly expressed siglec (sialic acid-binding immunoglobulin-like lectin) on B-cells that plays a role in various aspects of B-cell biology including differentiation, antigen presentation, and trafficking to bone marrow. Binds to alpha 2,6-linked sialic acid residues of surface molecules such as CD22 itself, CD45 and IgM in a cis configuration. Can also bind to ligands on other cells as an adhesion molecule in a trans configuration. Acts as an inhibitory coreceptor on the surface of B-cells and inhibits B-cell receptor induced signaling, characterized by inhibition of the calcium mobilization and cellular activation. Mechanistically, the immunoreceptor tyrosine-based inhibitory motif domain is phosphorylated by the Src kinase LYN, which in turn leads to the recruitment of the protein tyrosine phosphatase 1/PTPN6, leading to the negative regulation of BCR signaling. If this negative signaling from is of sufficient strength, apoptosis of the B-cell can be induced. The chain is B-cell receptor CD22 from Pongo pygmaeus (Bornean orangutan).